The sequence spans 582 residues: Putative phospholipase B-like 2 (582 aa).

The signal sequence occupies residues 1 to 42 (MTRLIRSKKQFLIRSLHSVFYYLGSLLHSTFEMNVFIGLLLA). 5 N-linked (GlcNAc...) asparagine glycosylation sites follow: Asn-91, Asn-141, Asn-178, Asn-224, and Asn-318. A disulfide bridge links Cys-139 with Cys-146. Cys-480 and Cys-482 are oxidised to a cystine. Residue Asn-502 is glycosylated (N-linked (GlcNAc...) asparagine).

This sequence belongs to the phospholipase B-like family.

Its subcellular location is the secreted. Functionally, putative phospholipase. The polypeptide is Putative phospholipase B-like 2 (Caenorhabditis elegans).